A 507-amino-acid polypeptide reads, in one-letter code: RNA-splicing ligase RtcB homolog (507 aa).

Mn(2+) is bound by residues aspartate 121, cysteine 124, histidine 229, histidine 261, and histidine 355. 228–232 (NHYAE) serves as a coordination point for GMP. GMP contacts are provided by residues 355–356 (HN), 404–407 (GGTM), serine 411, 430–433 (HGAG), and lysine 506. The active-site GMP-histidine intermediate is histidine 430.

Belongs to the RtcB family. As to quaternary structure, catalytic component of the tRNA-splicing ligase complex. It depends on Mn(2+) as a cofactor.

The catalysed reaction is a 3'-end 3'-phospho-ribonucleotide-RNA + a 5'-end dephospho-ribonucleoside-RNA + GTP = a ribonucleotidyl-ribonucleotide-RNA + GMP + diphosphate. The enzyme catalyses a 3'-end 2',3'-cyclophospho-ribonucleotide-RNA + a 5'-end dephospho-ribonucleoside-RNA + GTP + H2O = a ribonucleotidyl-ribonucleotide-RNA + GMP + diphosphate + H(+). Its function is as follows. Catalytic subunit of the tRNA-splicing ligase complex that acts by directly joining spliced tRNA halves to mature-sized tRNAs by incorporating the precursor-derived splice junction phosphate into the mature tRNA as a canonical 3',5'-phosphodiester. May act as an RNA ligase with broad substrate specificity, and may function toward other RNAs. This Micromonas pusilla (strain CCMP1545) (Picoplanktonic green alga) protein is RNA-splicing ligase RtcB homolog.